A 600-amino-acid chain; its full sequence is MSRPSSRAIYLHRKEYSQSMASEPTLLQHRVEHLMTCKLGTQRVREPKDALQKLQEMDAQGRVWSQDLFLQVRDGWLHLLDIETKEELDSYRLDNIKAIDVALNTCSYNSILSVTVQESGLPGISTLLFQCQEVGAEQLRTSLQKALEEELEERPRFGVHHPSQDRWKGPPLERPLPIQQAPPLEQRFSPEHRFPPEQPHNMTSERSISPSSRSLTHYPSAREPNGFTLPPPPRRAPSPEDPERDEEVLNHVLRDIELFAGKLKEVQARNSHKKTKLGRKKKKSKNGITQAEYIDCFQKIKLSFNLLGKLALRMQETSAPEFVGLIFQTLKFILSQCPEAGLPAKVISPLLTPKAIDLLQSCLSPPEDTLWKSLGTSWTTSWADWTGSEPPPYQPTFYDGWQIPQPRSMMPITNQDSISLRGSRMRSSLHFPRDEPYNHNPEYEDSNLPLSSPSPGRAALKMQVLYEFEARNAQELTVAQGEILEVLDQSKRWWLVKNEAGLTGYIPSNILEPLPAGAPRGHRQPSFRAPMLRLSSKPEEVTAWLQAENFSTVTVRTLGSLMGSQLLHMRPGELQMLCPQEAPRIQARLDAVRRMLGMTH.

The 128-residue stretch at glutamine 28–proline 155 folds into the PTB domain. Disordered stretches follow at residues glutamate 152–aspartate 245 and leucine 429–serine 452. Low complexity predominate over residues serine 204 to serine 214. At serine 238 the chain carries Phosphoserine. In terms of domain architecture, SH3 spans arginine 457–alanine 516.

This sequence belongs to the EPS8 family. In terms of assembly, interacts with ABI1. Part of a complex that contains SOS1, ABI1 and EPS8L2. Interacts with FASLG. As to expression, detected in embryonic gut. Detected in adult testis, placenta, adrenal gland and intestine.

Its subcellular location is the cytoplasm. In Mus musculus (Mouse), this protein is Epidermal growth factor receptor kinase substrate 8-like protein 3 (Eps8l3).